The following is an 80-amino-acid chain: Transcription elongation factor 1 homolog (80 aa).

Zn(2+) is bound by residues cysteine 25, cysteine 28, cysteine 49, and cysteine 52.

Belongs to the ELOF1 family.

Its subcellular location is the nucleus. Functionally, transcription elongation factor implicated in the maintenance of proper chromatin structure in actively transcribed regions. The chain is Transcription elongation factor 1 homolog from Encephalitozoon cuniculi (strain GB-M1) (Microsporidian parasite).